Consider the following 501-residue polypeptide: ATP synthase subunit alpha (501 aa).

Position 169 to 176 (169 to 176 (GDRQTGKT)) interacts with ATP.

Belongs to the ATPase alpha/beta chains family. In terms of assembly, F-type ATPases have 2 components, CF(1) - the catalytic core - and CF(0) - the membrane proton channel. CF(1) has five subunits: alpha(3), beta(3), gamma(1), delta(1), epsilon(1). CF(0) has three main subunits: a(1), b(2) and c(9-12). The alpha and beta chains form an alternating ring which encloses part of the gamma chain. CF(1) is attached to CF(0) by a central stalk formed by the gamma and epsilon chains, while a peripheral stalk is formed by the delta and b chains.

Its subcellular location is the cell membrane. The enzyme catalyses ATP + H2O + 4 H(+)(in) = ADP + phosphate + 5 H(+)(out). Its function is as follows. Produces ATP from ADP in the presence of a proton gradient across the membrane. The alpha chain is a regulatory subunit. The polypeptide is ATP synthase subunit alpha (Streptococcus gordonii (strain Challis / ATCC 35105 / BCRC 15272 / CH1 / DL1 / V288)).